The chain runs to 529 residues: Neuronal acetylcholine receptor subunit alpha-2 (529 aa).

The first 26 residues, 1-26 (MGPSCPVFLSFTKLSLWWLLLTPAGG), serve as a signal peptide directing secretion. Positions 27 to 56 (EEAKRPPPRAPGDPLSSPSPTALPQGGSHT) are disordered. Topologically, residues 27-264 (EEAKRPPPRA…VTYAFIIRRL (238 aa)) are extracellular. Residues Asn-79 and Asn-129 are each glycosylated (N-linked (GlcNAc...) asparagine). A disulfide bridge connects residues Cys-183 and Cys-197. A glycan (N-linked (GlcNAc...) asparagine) is linked at Asn-235. Cys-247 and Cys-248 form a disulfide bridge. 3 consecutive transmembrane segments (helical) span residues 265-289 (PLFY…VFYL), 297-315 (ITLC…LLIT), and 331-352 (YLLF…VLNV). The Cytoplasmic portion of the chain corresponds to 353 to 502 (HHRSPSTHTM…WKYVAMVIDR (150 aa)). Residues 503 to 521 (IFLWLFIIVCFLGTIGLFL) traverse the membrane as a helical segment.

This sequence belongs to the ligand-gated ion channel (TC 1.A.9) family. Acetylcholine receptor (TC 1.A.9.1) subfamily. Alpha-2/CHRNA2 sub-subfamily. As to quaternary structure, neuronal AChR is composed of two different types of subunits: alpha and non-alpha (beta). CHRNA2/alpha-2 subunit can be combined to CHRNB2/beta-2 or CHRNB4/beta-4 to give rise to functional receptors. Both CHRNA2:CHRNB2 and CHRNA2:CHRNB4 nAChR complexes are heteropentamers with two subtypes: LS (low agonist sensitivity) with a (CHRNA2)3:(CHRNB2/4)2 and HS (high agonist sensitivity) with a (CHRNA2)2:(CHRNB2/4)3 stoichiometries; the subtypes differ in their subunit binding interfaces which are involved in ligand binding.

It localises to the synaptic cell membrane. Its subcellular location is the cell membrane. The catalysed reaction is Ca(2+)(in) = Ca(2+)(out). The enzyme catalyses K(+)(in) = K(+)(out). It catalyses the reaction Na(+)(in) = Na(+)(out). Component of neuronal acetylcholine receptors (nAChRs) that function as pentameric, ligand-gated cation channels with high calcium permeability among other activities. nAChRs are excitatory neurotrasnmitter receptors formed by a collection of nAChR subunits known to mediate synaptic transmission in the nervous system and the neuromuscular junction. Each nAchR subunit confers differential attributes to channel properties, including activation, deactivation and desensitization kinetics, pH sensitivity, cation permeability, and binding to allosteric modulators. CHRNA2 forms heteropentameric neuronal acetylcholine receptors with CHRNB2 and CHRNB4 and plays a role in nicotine dependence. The protein is Neuronal acetylcholine receptor subunit alpha-2 (CHRNA2) of Pan troglodytes (Chimpanzee).